Consider the following 320-residue polypeptide: Holliday junction branch migration complex subunit RuvB (320 aa).

The tract at residues 1-172 (MTANVCLDES…FGIISRLEYY (172 aa)) is large ATPase domain (RuvB-L). Residues arginine 12, glycine 53, lysine 56, threonine 57, threonine 58, 119–121 (EDF), arginine 162, tyrosine 172, and arginine 209 contribute to the ATP site. Residue threonine 57 coordinates Mg(2+). Positions 173–243 (TPADLARIVA…LASEALGRME (71 aa)) are small ATPAse domain (RuvB-S). Residues 246-320 (ESGLDQMDRK…KAYRHLNLLG (75 aa)) are head domain (RuvB-H). Residues arginine 301 and arginine 306 each contribute to the DNA site.

The protein belongs to the RuvB family. Homohexamer. Forms an RuvA(8)-RuvB(12)-Holliday junction (HJ) complex. HJ DNA is sandwiched between 2 RuvA tetramers; dsDNA enters through RuvA and exits via RuvB. An RuvB hexamer assembles on each DNA strand where it exits the tetramer. Each RuvB hexamer is contacted by two RuvA subunits (via domain III) on 2 adjacent RuvB subunits; this complex drives branch migration. In the full resolvosome a probable DNA-RuvA(4)-RuvB(12)-RuvC(2) complex forms which resolves the HJ.

Its subcellular location is the cytoplasm. The catalysed reaction is ATP + H2O = ADP + phosphate + H(+). In terms of biological role, the RuvA-RuvB-RuvC complex processes Holliday junction (HJ) DNA during genetic recombination and DNA repair, while the RuvA-RuvB complex plays an important role in the rescue of blocked DNA replication forks via replication fork reversal (RFR). RuvA specifically binds to HJ cruciform DNA, conferring on it an open structure. The RuvB hexamer acts as an ATP-dependent pump, pulling dsDNA into and through the RuvAB complex. RuvB forms 2 homohexamers on either side of HJ DNA bound by 1 or 2 RuvA tetramers; 4 subunits per hexamer contact DNA at a time. Coordinated motions by a converter formed by DNA-disengaged RuvB subunits stimulates ATP hydrolysis and nucleotide exchange. Immobilization of the converter enables RuvB to convert the ATP-contained energy into a lever motion, pulling 2 nucleotides of DNA out of the RuvA tetramer per ATP hydrolyzed, thus driving DNA branch migration. The RuvB motors rotate together with the DNA substrate, which together with the progressing nucleotide cycle form the mechanistic basis for DNA recombination by continuous HJ branch migration. Branch migration allows RuvC to scan DNA until it finds its consensus sequence, where it cleaves and resolves cruciform DNA. This chain is Holliday junction branch migration complex subunit RuvB, found in Nitratidesulfovibrio vulgaris (strain ATCC 29579 / DSM 644 / CCUG 34227 / NCIMB 8303 / VKM B-1760 / Hildenborough) (Desulfovibrio vulgaris).